The primary structure comprises 224 residues: Ornithine decarboxylase antizyme (224 aa).

This sequence belongs to the ODC antizyme family. As to quaternary structure, interacts with ODC and thereby sterically blocks ODC homodimerization.

Functionally, ornithine decarboxylase (ODC) antizyme protein that negatively regulates ODC activity and intracellular polyamine biosynthesis in response to increased intracellular polyamine levels. Binds to ODC monomers, inhibiting the assembly of the functional ODC homodimer, and targets the monomers for ubiquitin-independent proteolytic destruction by the 26S proteasome. The polypeptide is Ornithine decarboxylase antizyme (spa1) (Schizosaccharomyces octosporus (Fission yeast)).